Here is a 197-residue protein sequence, read N- to C-terminus: MLPPIVLASQSPARRQLLKAAGIPFRVQPSYFDESQIKSSDPVELVQKLASAKAEVVAAQQREPVLVVGADSVLYLDGEILGKPPNALEAERRLRQMRGEVGELYTGHALIDTKQNRRLTHYAVTRVFFAKPSDEEIRAYVATGEPLNCAGCFAIDGRGSLFVERIEGCPGNVIGLSLPLLRRMMQELGYSLTDAWS.

The active-site Proton acceptor is Asp-71.

The protein belongs to the Maf family. A divalent metal cation is required as a cofactor.

The protein resides in the cytoplasm. It carries out the reaction a ribonucleoside 5'-triphosphate + H2O = a ribonucleoside 5'-phosphate + diphosphate + H(+). It catalyses the reaction a 2'-deoxyribonucleoside 5'-triphosphate + H2O = a 2'-deoxyribonucleoside 5'-phosphate + diphosphate + H(+). Functionally, nucleoside triphosphate pyrophosphatase. May have a dual role in cell division arrest and in preventing the incorporation of modified nucleotides into cellular nucleic acids. This Synechococcus sp. (strain JA-2-3B'a(2-13)) (Cyanobacteria bacterium Yellowstone B-Prime) protein is Nucleoside triphosphate pyrophosphatase.